The sequence spans 449 residues: Deoxyguanosinetriphosphate triphosphohydrolase-like protein (449 aa).

The segment at 1–27 is disordered; that stretch reads MTSSVWQERRHGEDKQRRNDHRSPYQR. Over residues 7-27 the composition is skewed to basic and acidic residues; it reads QERRHGEDKQRRNDHRSPYQR. Residues 59 to 255 enclose the HD domain; that stretch reads RLTHSLEVSQ…MELADDIAYA (197 aa).

The protein belongs to the dGTPase family. Type 2 subfamily.

In Shewanella baltica (strain OS195), this protein is Deoxyguanosinetriphosphate triphosphohydrolase-like protein.